Reading from the N-terminus, the 98-residue chain is Putative membrane protein insertion efficiency factor (98 aa).

This sequence belongs to the UPF0161 family.

The protein localises to the cell inner membrane. In terms of biological role, could be involved in insertion of integral membrane proteins into the membrane. The polypeptide is Putative membrane protein insertion efficiency factor (Cupriavidus pinatubonensis (strain JMP 134 / LMG 1197) (Cupriavidus necator (strain JMP 134))).